Consider the following 303-residue polypeptide: N-acetyl-D-glucosamine kinase (303 aa).

ATP is bound by residues 4 to 11 (GFDIGGTK) and 133 to 140 (GVGGGLIF). 4 residues coordinate Zn(2+): histidine 157, cysteine 177, cysteine 179, and cysteine 184.

The protein belongs to the ROK (NagC/XylR) family. NagK subfamily.

It carries out the reaction N-acetyl-D-glucosamine + ATP = N-acetyl-D-glucosamine 6-phosphate + ADP + H(+). It participates in cell wall biogenesis; peptidoglycan recycling. Catalyzes the phosphorylation of N-acetyl-D-glucosamine (GlcNAc) derived from cell-wall degradation, yielding GlcNAc-6-P. The chain is N-acetyl-D-glucosamine kinase from Escherichia coli O81 (strain ED1a).